Consider the following 205-residue polypeptide: uncharacterized protein (205 aa).

A run of 4 helical transmembrane segments spans residues 18 to 38, 69 to 89, 106 to 126, and 127 to 147; these read ATVN…GTIG, LGIF…CFYA, VVWI…YYIM, and LLHP…LFLI.

It localises to the mitochondrion membrane. This is an uncharacterized protein from Arabidopsis thaliana (Mouse-ear cress).